A 139-amino-acid chain; its full sequence is Large ribosomal subunit protein uL16c (139 aa).

The protein belongs to the universal ribosomal protein uL16 family. Part of the 50S ribosomal subunit.

The protein localises to the plastid. Its subcellular location is the chloroplast. This chain is Large ribosomal subunit protein uL16c, found in Cicer arietinum (Chickpea).